The following is a 59-amino-acid chain: Putative movement protein p6.6 (59 aa).

The chain crosses the membrane as a helical span at residues 13 to 35 (RVGPLLVLCLLLLLILFSRSWNV).

It is found in the membrane. In terms of biological role, cell-to-cell movement. The sequence is that of Putative movement protein p6.6 from Panicum mosaic virus (strain United States/Kansas 109S) (PMV).